Here is a 396-residue protein sequence, read N- to C-terminus: L-cysteine desulfidase (396 aa).

Residue cysteine 23 is the Proton acceptor of the active site. Cysteine 288, cysteine 330, and cysteine 337 together coordinate [4Fe-4S] cluster.

This sequence belongs to the L-cysteine desulfidase family. As to quaternary structure, homotrimer. [4Fe-4S] cluster is required as a cofactor.

The catalysed reaction is L-cysteine + H2O = hydrogen sulfide + pyruvate + NH4(+) + H(+). In terms of biological role, catalyzes the cleavage of L-cysteine to form 2-aminoprop-2-enoate and sulfide. The former then spontaneously hydrolyzes to pyruvate and NH(3). May be responsible for the production of sulfide required for the biosynthesis of iron-sulfur centers in this archaea. The polypeptide is L-cysteine desulfidase (Methanococcus maripaludis (strain C6 / ATCC BAA-1332)).